The following is a 103-amino-acid chain: Integration host factor subunit alpha (103 aa).

This sequence belongs to the bacterial histone-like protein family. Heterodimer of an alpha and a beta chain.

In terms of biological role, this protein is one of the two subunits of integration host factor, a specific DNA-binding protein that functions in genetic recombination as well as in transcriptional and translational control. This Bartonella bacilliformis (strain ATCC 35685 / KC583 / Herrer 020/F12,63) protein is Integration host factor subunit alpha.